Consider the following 119-residue polypeptide: Small ribosomal subunit protein bS16 (119 aa).

Belongs to the bacterial ribosomal protein bS16 family.

The polypeptide is Small ribosomal subunit protein bS16 (Chlamydia caviae (strain ATCC VR-813 / DSM 19441 / 03DC25 / GPIC) (Chlamydophila caviae)).